We begin with the raw amino-acid sequence, 221 residues long: Large ribosomal subunit protein uL4 (221 aa).

The disordered stretch occupies residues 56 to 83 (HATKTRGMVSGGGRKPWKQKGTGRARQG).

The protein belongs to the universal ribosomal protein uL4 family. As to quaternary structure, part of the 50S ribosomal subunit.

One of the primary rRNA binding proteins, this protein initially binds near the 5'-end of the 23S rRNA. It is important during the early stages of 50S assembly. It makes multiple contacts with different domains of the 23S rRNA in the assembled 50S subunit and ribosome. In terms of biological role, forms part of the polypeptide exit tunnel. The polypeptide is Large ribosomal subunit protein uL4 (Bifidobacterium adolescentis (strain ATCC 15703 / DSM 20083 / NCTC 11814 / E194a)).